We begin with the raw amino-acid sequence, 64 residues long: MKNKFAALVITLFVLVLAIDNVTTECLEGCECNQDSTGKTCRPKQGSNVSPAVCLAQYCYHGYC.

A signal peptide spans 1–24 (MKNKFAALVITLFVLVLAIDNVTT).

This sequence belongs to the scolopendra neurotoxin 6 family. Post-translationally, contains 3 disulfide bonds. As to expression, expressed by the venom gland.

The protein localises to the secreted. This chain is Putative neurotoxin 6, found in Scolopendra mutilans (Chinese red-headed centipede).